The sequence spans 529 residues: Cytochrome P450 monooxygenase patI (529 aa).

Residues 1–8 (MDFTQVPP) lie on the Cytoplasmic side of the membrane. A helical membrane pass occupies residues 9–25 (SYILGVLLSSTSILFCL). Residues 26–529 (KYLLRSGYRP…EAQGVFSRFD (504 aa)) lie on the Lumenal side of the membrane. N-linked (GlcNAc...) asparagine glycosylation is found at N81 and N383. Residue C449 coordinates heme.

It belongs to the cytochrome P450 family. Heme is required as a cofactor.

The protein localises to the endoplasmic reticulum membrane. The enzyme catalyses 3-hydroxybenzyl alcohol + reduced [NADPH--hemoprotein reductase] + O2 = gentisyl alcohol + oxidized [NADPH--hemoprotein reductase] + H2O + H(+). It participates in mycotoxin biosynthesis; patulin biosynthesis. Its function is as follows. Cytochrome P450 monooxygenase; part of the gene cluster that mediates the biosynthesis of patulin, an acetate-derived tetraketide mycotoxin produced by several fungal species that shows antimicrobial properties against several bacteria. PatI catalyzes the conversion of m-hydroxybenzyl alcohol into gentisyl alcohol. The pathway begins with the synthesis of 6-methylsalicylic acid by the polyketide synthase (PKS) patK via condensation of acetate and malonate units. The 6-methylsalicylic acid decarboxylase patG then catalyzes the decarboxylation of 6-methylsalicylic acid to yield m-cresol (also known as 3-methylphenol). These first reactions occur in the cytosol. The intermediate m-cresol is then transported into the endoplasmic reticulum where the cytochrome P450 monooxygenase patH converts it to m-hydroxybenzyl alcohol, which is further converted to gentisyl alcohol by the cytochrome P450 monooxygenase patI. The oxidoreductases patJ and patO further convert gentisyl alcohol to isoepoxydon in the vacuole. PatN catalyzes then the transformation of isoepoxydon into phyllostine. The cluster protein patF is responsible for the conversion from phyllostine to neopatulin whereas the alcohol dehydrogenase patD converts neopatulin to E-ascladiol. The steps between isoepoxydon and E-ascladiol occur in the cytosol, and E-ascladiol is probably secreted to the extracellular space by one of the cluster-specific transporters patC or patM. Finally, the secreted patulin synthase patE catalyzes the conversion of E-ascladiol to patulin. This is Cytochrome P450 monooxygenase patI from Aspergillus clavatus (strain ATCC 1007 / CBS 513.65 / DSM 816 / NCTC 3887 / NRRL 1 / QM 1276 / 107).